A 459-amino-acid polypeptide reads, in one-letter code: Cytosolic carboxypeptidase 6 (459 aa).

The Peptidase M14 domain occupies 142–418 (IPYTYGQMQI…AFCRALLNFY (277 aa)). His-204, Glu-207, and His-302 together coordinate Zn(2+). Glu-376 serves as the catalytic Proton donor/acceptor.

Belongs to the peptidase M14 family. Zn(2+) is required as a cofactor. As to expression, expressed in labial and amphid neurons.

It is found in the cytoplasm. The enzyme catalyses (L-glutamyl)(n+1)-gamma-L-glutamyl-L-glutamyl-[protein] + H2O = (L-glutamyl)(n)-gamma-L-glutamyl-L-glutamyl-[protein] + L-glutamate. Its function is as follows. Metallocarboxypeptidase that catalyzes the removing of polyglutamate side chains that are present on the gamma-carboxyl group of glutamate residues of tubulin in sensory cilia. Probably via the deglutamylation of tubulin, promotes microtubule stability required for axon regrowth after injury. Also regulates microtubule dynamics in uterine muscle cells. The chain is Cytosolic carboxypeptidase 6 from Caenorhabditis elegans.